Reading from the N-terminus, the 285-residue chain is tRNA (guanine-N(7)-)-methyltransferase (285 aa).

Residues Gly102, 125-126 (EI), 160-161 (NA), and Cys180 contribute to the S-adenosyl-L-methionine site. Residue Asp183 is part of the active site. 258–260 (TEE) lines the S-adenosyl-L-methionine pocket.

This sequence belongs to the class I-like SAM-binding methyltransferase superfamily. TrmB family. As to quaternary structure, forms a complex with TRM82.

It localises to the nucleus. It carries out the reaction guanosine(46) in tRNA + S-adenosyl-L-methionine = N(7)-methylguanosine(46) in tRNA + S-adenosyl-L-homocysteine. Its pathway is tRNA modification; N(7)-methylguanine-tRNA biosynthesis. In terms of biological role, catalyzes the formation of N(7)-methylguanine at position 46 (m7G46) in tRNA. The sequence is that of tRNA (guanine-N(7)-)-methyltransferase from Candida glabrata (strain ATCC 2001 / BCRC 20586 / JCM 3761 / NBRC 0622 / NRRL Y-65 / CBS 138) (Yeast).